The primary structure comprises 245 residues: Enolase-phosphatase E1 (245 aa).

It belongs to the HAD-like hydrolase superfamily. MasA/MtnC family. In terms of assembly, monomer. It depends on Mg(2+) as a cofactor.

The enzyme catalyses 5-methylsulfanyl-2,3-dioxopentyl phosphate + H2O = 1,2-dihydroxy-5-(methylsulfanyl)pent-1-en-3-one + phosphate. Its pathway is amino-acid biosynthesis; L-methionine biosynthesis via salvage pathway; L-methionine from S-methyl-5-thio-alpha-D-ribose 1-phosphate: step 3/6. The protein operates within amino-acid biosynthesis; L-methionine biosynthesis via salvage pathway; L-methionine from S-methyl-5-thio-alpha-D-ribose 1-phosphate: step 4/6. Functionally, bifunctional enzyme that catalyzes the enolization of 2,3-diketo-5-methylthiopentyl-1-phosphate (DK-MTP-1-P) into the intermediate 2-hydroxy-3-keto-5-methylthiopentenyl-1-phosphate (HK-MTPenyl-1-P), which is then dephosphorylated to form the acireductone 1,2-dihydroxy-3-keto-5-methylthiopentene (DHK-MTPene). The chain is Enolase-phosphatase E1 from Parasynechococcus marenigrum (strain WH8102).